Reading from the N-terminus, the 268-residue chain is Bidirectional sugar transporter N3 (268 aa).

The Extracellular portion of the chain corresponds to 1-7; sequence MAISHNT. Residues 8 to 28 form a helical membrane-spanning segment; the sequence is LAFTFGMLGNVISFLVFLAPI. Residues 10-96 enclose the MtN3/slv 1 domain; that stretch reads FTFGMLGNVI…ILYIIYAPRD (87 aa). The Cytoplasmic segment spans residues 29-42; that stretch reads STFYRIYKKKSTEG. The chain crosses the membrane as a helical span at residues 43–63; sequence FQSLPYLVALFSSMLWLYYAL. Residues 64 to 70 are Extracellular-facing; it reads LKKDAFL. Residues 71 to 91 form a helical membrane-spanning segment; sequence LITINSFGCVVETIYIILYII. The Cytoplasmic segment spans residues 92-103; the sequence is YAPRDARNLTFK. A helical transmembrane segment spans residues 104–124; the sequence is LLSAMNVGSFALILIVTNYAV. The Extracellular portion of the chain corresponds to 125–131; the sequence is HGPLRVQ. A MtN3/slv 2 domain is found at 131–214; it reads QVLGWVCVSL…QMLLYAIYRN (84 aa). Residues 132 to 152 traverse the membrane as a helical segment; it reads VLGWVCVSLSVSVFAAPLSIV. The Cytoplasmic segment spans residues 153 to 165; it reads AQVVRTKSVEFMP. Residues 166–186 traverse the membrane as a helical segment; it reads FNLSFTLTLSATMWFGYGFFL. Over 187–190 the chain is Extracellular; sequence KDIC. Residues 191-211 form a helical membrane-spanning segment; it reads IXLPNVLGXVLGLLQMLLYAI. At 212-268 the chain is on the cytoplasmic side; sequence YRNGGEKAMKKEKKAPIEPPKSIVIETQLEKIEQEKKNKDDDNEEKDKSEEPIGCGV. Residues 234 to 262 are a coiled coil; sequence IVIETQLEKIEQEKKNKDDDNEEKDKSEE. Residues 243 to 262 are compositionally biased toward basic and acidic residues; it reads IEQEKKNKDDDNEEKDKSEE. Residues 243–268 are disordered; sequence IEQEKKNKDDDNEEKDKSEEPIGCGV.

Belongs to the SWEET sugar transporter family. Forms homooligomers and/or heterooligomers.

The protein resides in the cell membrane. Its function is as follows. Mediates both low-affinity uptake and efflux of sugar across the plasma membrane. This chain is Bidirectional sugar transporter N3 (N3), found in Medicago truncatula (Barrel medic).